Reading from the N-terminus, the 408-residue chain is Acetate kinase (408 aa).

Asparagine 7 is a Mg(2+) binding site. Lysine 14 contacts ATP. Arginine 91 serves as a coordination point for substrate. Aspartate 148 functions as the Proton donor/acceptor in the catalytic mechanism. Residues 208–212 (HLGNG), 283–285 (DFR), and 331–335 (GIGEN) each bind ATP. Glutamate 384 lines the Mg(2+) pocket.

Belongs to the acetokinase family. As to quaternary structure, homodimer. Mg(2+) serves as cofactor. The cofactor is Mn(2+).

It is found in the cytoplasm. It catalyses the reaction acetate + ATP = acetyl phosphate + ADP. The protein operates within metabolic intermediate biosynthesis; acetyl-CoA biosynthesis; acetyl-CoA from acetate: step 1/2. Inhibited by diethylpyrocarbonate, hydroxylamine and phenylglyoxal. Functionally, catalyzes the formation of acetyl phosphate from acetate and ATP. Can also catalyze the reverse reaction. Can also phosphorylate propionate, but has very low activity toward butyrate. This is Acetate kinase from Methanosarcina thermophila.